Consider the following 434-residue polypeptide: Serine/threonine transporter SstT (434 aa).

9 consecutive transmembrane segments (helical) span residues 14 to 34 (IVIG…WSFI), 41 to 61 (FVGA…MSAI), 72 to 92 (FGTV…AAVA), 135 to 155 (ALVE…GSGL), 172 to 192 (TVSA…VGLL), 210 to 230 (LLML…PFMV), 282 to 302 (ISIP…VSIM), 316 to 336 (IFLA…VSGI), and 351 to 371 (FGIS…IGVV). The tract at residues 414–434 (KGTAEVVTPEKANEAEESEQV) is disordered.

Belongs to the dicarboxylate/amino acid:cation symporter (DAACS) (TC 2.A.23) family.

It localises to the cell membrane. The enzyme catalyses L-serine(in) + Na(+)(in) = L-serine(out) + Na(+)(out). It catalyses the reaction L-threonine(in) + Na(+)(in) = L-threonine(out) + Na(+)(out). In terms of biological role, involved in the import of serine and threonine into the cell, with the concomitant import of sodium (symport system). The polypeptide is Serine/threonine transporter SstT (Lacticaseibacillus paracasei (strain ATCC 334 / BCRC 17002 / CCUG 31169 / CIP 107868 / KCTC 3260 / NRRL B-441) (Lactobacillus paracasei)).